The sequence spans 90 residues: Hemoglobin subunit alpha-1 (90 aa).

The Globin domain maps to 1–90; the sequence is VLTDDDKNHV…SKLSDLHAEK (90 aa).

This sequence belongs to the globin family. In terms of assembly, heterotetramer of two alpha chains and two beta chains. Red blood cells.

In terms of biological role, involved in oxygen transport from the lung to the various peripheral tissues. The sequence is that of Hemoglobin subunit alpha-1 from Saara hardwickii (Indian spiny-tailed lizard).